Consider the following 320-residue polypeptide: Mitochondrial thiamine pyrophosphate carrier 1 (320 aa).

Solcar repeat units lie at residues 12 to 110 (GTRR…TTQA), 119 to 205 (PQPV…LRPS), and 213 to 308 (PFGS…TLRA). 6 helical membrane passes run 17 to 35 (VVLA…VAPL), 91 to 107 (LMYV…YRTT), 125 to 145 (FVAG…LDLL), 180 to 197 (GCSA…LFFA), 219 to 239 (ALAG…LDLV), and 283 to 300 (GLTV…VTMW).

It belongs to the mitochondrial carrier (TC 2.A.29) family.

It is found in the mitochondrion inner membrane. Mitochondrial transporter that mediates uptake of thiamine pyrophosphate (ThPP) into mitochondria. This chain is Mitochondrial thiamine pyrophosphate carrier 1 (tpc1), found in Aspergillus terreus (strain NIH 2624 / FGSC A1156).